Here is a 247-residue protein sequence, read N- to C-terminus: Flavin-dependent thymidylate synthase (247 aa).

The region spanning Met-1–Glu-237 is the ThyX domain. DUMP-binding positions include Gln-85–Arg-88, Ser-98–Arg-100, and Arg-176. Arg-88–Arg-90 serves as a coordination point for FAD. The short motif at Arg-88 to Ser-98 is the ThyX motif element. Residues Asn-192–Arg-194 and His-198 contribute to the FAD site. Arg-203 provides a ligand contact to dUMP. The active-site Involved in ionization of N3 of dUMP, leading to its activation is Arg-203.

It belongs to the thymidylate synthase ThyX family. In terms of assembly, homotetramer. FAD serves as cofactor.

The catalysed reaction is dUMP + (6R)-5,10-methylene-5,6,7,8-tetrahydrofolate + NADPH + H(+) = dTMP + (6S)-5,6,7,8-tetrahydrofolate + NADP(+). Its pathway is pyrimidine metabolism; dTTP biosynthesis. Functionally, catalyzes the reductive methylation of 2'-deoxyuridine-5'-monophosphate (dUMP) to 2'-deoxythymidine-5'-monophosphate (dTMP) while utilizing 5,10-methylenetetrahydrofolate (mTHF) as the methyl donor, and NADPH and FADH(2) as the reductant. The polypeptide is Flavin-dependent thymidylate synthase (Halobacterium salinarum (strain ATCC 700922 / JCM 11081 / NRC-1) (Halobacterium halobium)).